The sequence spans 210 residues: Casparian strip membrane protein 1 (210 aa).

A disordered region spans residues 1 to 25 (MEKSEATTIDVAETSRESKGKAPLL). Topologically, residues 1-48 (MEKSEATTIDVAETSRESKGKAPLLRDPPAWVPAAVERQRAAPAYKRG) are cytoplasmic. The helical transmembrane segment at 49 to 69 (VAIFDLILRISAATAALAATI) threads the bilayer. At 70–98 (TMGTTEQTLPFFTQFFQFQASYDDLPTFT) the chain is on the extracellular side. The chain crosses the membrane as a helical span at residues 99–119 (FFVIAMSIVTGYLVLSVPFSI). The Cytoplasmic segment spans residues 120-138 (VCIARPVAAAPRLLLILCD). The helical transmembrane segment at 139 to 159 (TLAVTLNTSAAGASAAIVYLA) threads the bilayer. Residues 160–183 (HNGNSDANWLAICQQFNDFCQRTS) are Extracellular-facing. Residues 184-204 (GAVVASFVAVVLLIFLVVLSA) traverse the membrane as a helical segment. Residues 205–210 (SALKKH) are Cytoplasmic-facing.

The protein belongs to the Casparian strip membrane proteins (CASP) family. Homodimer and heterodimers.

Its subcellular location is the cell membrane. In terms of biological role, regulates membrane-cell wall junctions and localized cell wall deposition. Required for establishment of the Casparian strip membrane domain (CSD) and the subsequent formation of Casparian strips, a cell wall modification of the root endodermis that determines an apoplastic barrier between the intraorganismal apoplasm and the extraorganismal apoplasm and prevents lateral diffusion. The sequence is that of Casparian strip membrane protein 1 from Erythranthe guttata (Yellow monkey flower).